The chain runs to 749 residues: 5-methyltetrahydropteroyltriglutamate--homocysteine methyltransferase (749 aa).

Residues R15–K18 and K114 each bind 5-methyltetrahydropteroyltri-L-glutamate. Residues I425–S427 and E478 each bind L-homocysteine. L-methionine-binding positions include I425–S427 and E478. W555 serves as a coordination point for 5-methyltetrahydropteroyltri-L-glutamate. D593 serves as a coordination point for L-homocysteine. D593 contributes to the L-methionine binding site. Residue E599 coordinates 5-methyltetrahydropteroyltri-L-glutamate. Zn(2+) contacts are provided by H636, C638, and E660. The active-site Proton donor is H689. C721 serves as a coordination point for Zn(2+).

It belongs to the vitamin-B12 independent methionine synthase family. It depends on Zn(2+) as a cofactor.

It catalyses the reaction 5-methyltetrahydropteroyltri-L-glutamate + L-homocysteine = tetrahydropteroyltri-L-glutamate + L-methionine. It functions in the pathway amino-acid biosynthesis; L-methionine biosynthesis via de novo pathway; L-methionine from L-homocysteine (MetE route): step 1/1. Functionally, catalyzes the transfer of a methyl group from 5-methyltetrahydrofolate to homocysteine resulting in methionine formation. This is 5-methyltetrahydropteroyltriglutamate--homocysteine methyltransferase from Streptococcus suis (strain 05ZYH33).